The primary structure comprises 454 residues: tRNA-2-methylthio-N(6)-dimethylallyladenosine synthase (454 aa).

One can recognise an MTTase N-terminal domain in the interval 6–122 (RRYHITTFGC…LKDLLESVFA (117 aa)). C15, C51, C85, C157, C161, and C164 together coordinate [4Fe-4S] cluster. The Radical SAM core domain occupies 143–380 (RDSTVTAWVN…NHLVNVKAAE (238 aa)). Positions 383-447 (QRYMGRIEEV…AFSLTGEPIE (65 aa)) constitute a TRAM domain.

The protein belongs to the methylthiotransferase family. MiaB subfamily. As to quaternary structure, monomer. [4Fe-4S] cluster is required as a cofactor.

It localises to the cytoplasm. It carries out the reaction N(6)-dimethylallyladenosine(37) in tRNA + (sulfur carrier)-SH + AH2 + 2 S-adenosyl-L-methionine = 2-methylsulfanyl-N(6)-dimethylallyladenosine(37) in tRNA + (sulfur carrier)-H + 5'-deoxyadenosine + L-methionine + A + S-adenosyl-L-homocysteine + 2 H(+). Functionally, catalyzes the methylthiolation of N6-(dimethylallyl)adenosine (i(6)A), leading to the formation of 2-methylthio-N6-(dimethylallyl)adenosine (ms(2)i(6)A) at position 37 in tRNAs that read codons beginning with uridine. The chain is tRNA-2-methylthio-N(6)-dimethylallyladenosine synthase from Nostoc sp. (strain PCC 7120 / SAG 25.82 / UTEX 2576).